Reading from the N-terminus, the 377-residue chain is Chorismate synthase (377 aa).

Arg-47 serves as a coordination point for NADP(+). FMN-binding positions include 124 to 126, 252 to 253, Gly-296, 311 to 315, and Arg-338; these read RSS, NS, and KPTPS.

The protein belongs to the chorismate synthase family. It depends on FMNH2 as a cofactor.

The catalysed reaction is 5-O-(1-carboxyvinyl)-3-phosphoshikimate = chorismate + phosphate. The protein operates within metabolic intermediate biosynthesis; chorismate biosynthesis; chorismate from D-erythrose 4-phosphate and phosphoenolpyruvate: step 7/7. In terms of biological role, catalyzes the anti-1,4-elimination of the C-3 phosphate and the C-6 proR hydrogen from 5-enolpyruvylshikimate-3-phosphate (EPSP) to yield chorismate, which is the branch point compound that serves as the starting substrate for the three terminal pathways of aromatic amino acid biosynthesis. This reaction introduces a second double bond into the aromatic ring system. The sequence is that of Chorismate synthase from Methanococcus vannielii (strain ATCC 35089 / DSM 1224 / JCM 13029 / OCM 148 / SB).